The primary structure comprises 384 residues: Early estrogen-induced gene 1 protein (384 aa).

Residues 2–145 (AFLMKKKKFK…ILKVTIGMFL (144 aa)) enclose the C2 NT-type domain. A required for interaction with TNFRSF11A/RANK region spans residues 129–138 (NTRQDNSILK). The tract at residues 173 to 315 (LTCKGGGTSS…RRKKDSVESH (143 aa)) is disordered. Over residues 183-193 (GGSSTNSLTGS) the composition is skewed to low complexity. The segment covering 227 to 254 (SRNSSYASQQSKISGYSTEHSRSSSLSD) has biased composition (polar residues). Composition is skewed to basic and acidic residues over residues 280–292 (GSER…EKPP) and 299–315 (HLSD…VESH).

It belongs to the EEIG family. In terms of assembly, part of a complex composed of EEIG1, TNFRSF11A/RANK, PLCG2, GAB2, TEC and BTK; complex formation increases in the presence of TNFSF11/RANKL. Interacts with PRDM1/BLIMP1; following TNFSF11/RANKL stimulation in bone marrow-derived macrophages, the interaction promotes the binding of PRDM1/BLIMP1 to the gene promoter of IRF8.

Its subcellular location is the nucleus. It localises to the cytoplasm. It is found in the membrane raft. In terms of biological role, key component of TNFSF11/RANKL- and TNF-induced osteoclastogenesis pathways, thereby mediates bone resorption in pathological bone loss conditions. Required for TNFSF11/RANKL-induced osteoclastogenesis via its interaction with TNFRSF11A/RANK, thereby facilitates the downsteam transcription of NFATC1 and activation of PLCG2. Facilitates recruitment of the transcriptional repressor PRDM1/BLIMP1 to the promoter of the anti-osteoclastogenesis gene IRF8, thereby resulting in transcription of osteoclast differentiation factors. May play a role in estrogen action. In Homo sapiens (Human), this protein is Early estrogen-induced gene 1 protein.